A 361-amino-acid chain; its full sequence is Putative agmatine deiminase (361 aa).

Residue C354 is the Amidino-cysteine intermediate of the active site.

Belongs to the agmatine deiminase family.

The catalysed reaction is agmatine + H2O = N-carbamoylputrescine + NH4(+). The polypeptide is Putative agmatine deiminase (Streptococcus pneumoniae (strain ATCC 700669 / Spain 23F-1)).